The following is a 208-amino-acid chain: Endo-1,4-beta-xylanase B (208 aa).

Residues 1–16 (MKVTAAFAGLLATTLA) form the signal peptide. A GH11 domain is found at 17 to 207 (APATELVTRS…GTGTASVTVS (191 aa)). Residue Glu101 is the Nucleophile of the active site. Residue Glu194 is the Proton donor of the active site.

Belongs to the glycosyl hydrolase 11 (cellulase G) family.

Its subcellular location is the secreted. The enzyme catalyses Endohydrolysis of (1-&gt;4)-beta-D-xylosidic linkages in xylans.. It functions in the pathway glycan degradation; xylan degradation. Its activity is regulated as follows. N-bromosuccinimide completely inhibits the catalytic activity. Functionally, endo-1,4-beta-xylanase involved in the hydrolysis of xylan, a major structural heterogeneous polysaccharide found in plant biomass representing the second most abundant polysaccharide in the biosphere, after cellulose. The polypeptide is Endo-1,4-beta-xylanase B (xynB) (Talaromyces purpureogenus (Soft rot fungus)).